We begin with the raw amino-acid sequence, 360 residues long: Protein Wnt-2 (360 aa).

An N-terminal signal peptide occupies residues 1-25 (MNACLVGIWLWLPLLFTWLSPEVSS). Cystine bridges form between cysteine 76–cysteine 87, cysteine 127–cysteine 135, cysteine 137–cysteine 157, cysteine 206–cysteine 220, cysteine 208–cysteine 215, cysteine 278–cysteine 309, cysteine 294–cysteine 304, cysteine 308–cysteine 348, cysteine 324–cysteine 339, cysteine 326–cysteine 336, and cysteine 331–cysteine 332. Serine 212 is lipidated: O-palmitoleoyl serine; by PORCN. N-linked (GlcNAc...) asparagine glycosylation is present at asparagine 295.

This sequence belongs to the Wnt family. Palmitoleoylation is required for efficient binding to frizzled receptors. Depalmitoleoylation leads to Wnt signaling pathway inhibition.

It is found in the secreted. Its subcellular location is the extracellular space. The protein localises to the extracellular matrix. Functionally, ligand for members of the frizzled family of seven transmembrane receptors. Probable developmental protein. May be a signaling molecule which affects the development of discrete regions of tissues. Is likely to signal over only few cell diameters. This is Protein Wnt-2 (WNT2) from Muntiacus muntjak (Barking deer).